Reading from the N-terminus, the 222-residue chain is MKKQLVNMKGTKDGFVLRLDDQCAYSDLVEELKKKVLEGGIDGKVDVQLYLGYRYCTDEQIDELIHIVQETEQLIVASVQSEVLTVHESNQKMIESQQDTYLGVVRSGQILRSSGDIIIVGNVNPNGRVEAGGNVYVLGKLKGIVHAGVQGNKEAIIAASQFEATHIMIADQVEAMSDEHVKEINQAEMTCAFIGYDGRITYDQIHALKNIRPLLNVSKGGS.

It belongs to the MinC family. As to quaternary structure, interacts with MinD and FtsZ.

In terms of biological role, cell division inhibitor that blocks the formation of polar Z ring septums. Rapidly oscillates between the poles of the cell to destabilize FtsZ filaments that have formed before they mature into polar Z rings. Prevents FtsZ polymerization. The chain is Probable septum site-determining protein MinC from Lysinibacillus sphaericus (strain C3-41).